The following is a 174-amino-acid chain: MNYFELFKFSPAFDIDTALLAERYRELQRAVHPDKFANDTEQQKLLSVQRTAQVNDGFQTLKDPIRRAEHMLSLRGIELSHETTTVKDTGFLMQQMEWREALEDIRDSADPQASIDALYQSFAEYRAQLTQQLTQLLTSEQAEDALLAADQVRKLKFMAKLHDELTRVEDALLD.

The J domain maps to Asn2–Leu74.

The protein belongs to the HscB family. In terms of assembly, interacts with HscA and stimulates its ATPase activity.

Co-chaperone involved in the maturation of iron-sulfur cluster-containing proteins. Seems to help targeting proteins to be folded toward HscA. This chain is Co-chaperone protein HscB homolog, found in Shewanella baltica (strain OS155 / ATCC BAA-1091).